The chain runs to 595 residues: Elongation factor 4 (595 aa).

In terms of domain architecture, tr-type G spans Glu2–Lys184. Residues Asp14–Thr19 and Asn131–Asp134 each bind GTP.

It belongs to the TRAFAC class translation factor GTPase superfamily. Classic translation factor GTPase family. LepA subfamily.

Its subcellular location is the cell membrane. It catalyses the reaction GTP + H2O = GDP + phosphate + H(+). Functionally, required for accurate and efficient protein synthesis under certain stress conditions. May act as a fidelity factor of the translation reaction, by catalyzing a one-codon backward translocation of tRNAs on improperly translocated ribosomes. Back-translocation proceeds from a post-translocation (POST) complex to a pre-translocation (PRE) complex, thus giving elongation factor G a second chance to translocate the tRNAs correctly. Binds to ribosomes in a GTP-dependent manner. The polypeptide is Elongation factor 4 (Buchnera aphidicola subsp. Baizongia pistaciae (strain Bp)).